The primary structure comprises 167 residues: Schlafen-like protein (167 aa).

This sequence belongs to the Schlafen family. Subgroup poxviridae B3 subfamily.

The sequence is that of Schlafen-like protein from Bos taurus (Bovine).